A 132-amino-acid chain; its full sequence is Ribosome-binding factor A (132 aa).

This sequence belongs to the RbfA family. In terms of assembly, monomer. Binds 30S ribosomal subunits, but not 50S ribosomal subunits or 70S ribosomes.

The protein resides in the cytoplasm. One of several proteins that assist in the late maturation steps of the functional core of the 30S ribosomal subunit. Associates with free 30S ribosomal subunits (but not with 30S subunits that are part of 70S ribosomes or polysomes). Required for efficient processing of 16S rRNA. May interact with the 5'-terminal helix region of 16S rRNA. The chain is Ribosome-binding factor A from Pseudomonas putida (strain GB-1).